Here is a 282-residue protein sequence, read N- to C-terminus: 4-diphosphocytidyl-2-C-methyl-D-erythritol kinase (282 aa).

Residue lysine 9 is part of the active site. 98-108 is an ATP binding site; that stretch reads PMGGGLGGGSS. Aspartate 140 is a catalytic residue.

It belongs to the GHMP kinase family. IspE subfamily. Homodimer.

The catalysed reaction is 4-CDP-2-C-methyl-D-erythritol + ATP = 4-CDP-2-C-methyl-D-erythritol 2-phosphate + ADP + H(+). It functions in the pathway isoprenoid biosynthesis; isopentenyl diphosphate biosynthesis via DXP pathway; isopentenyl diphosphate from 1-deoxy-D-xylulose 5-phosphate: step 3/6. Functionally, catalyzes the phosphorylation of the position 2 hydroxy group of 4-diphosphocytidyl-2C-methyl-D-erythritol. The sequence is that of 4-diphosphocytidyl-2-C-methyl-D-erythritol kinase from Salmonella schwarzengrund (strain CVM19633).